The sequence spans 207 residues: Superoxide dismutase [Mn] (207 aa).

Residues His-28, His-76, Asp-160, and His-164 each contribute to the Mn(2+) site.

Belongs to the iron/manganese superoxide dismutase family. Requires Mn(2+) as cofactor.

The enzyme catalyses 2 superoxide + 2 H(+) = H2O2 + O2. Destroys superoxide anion radicals which are normally produced within the cells and which are toxic to biological systems. This chain is Superoxide dismutase [Mn] (sodA), found in Mycobacterium leprae (strain TN).